Reading from the N-terminus, the 288-residue chain is Shikimate dehydrogenase (NADP(+)) (288 aa).

Residues 15–17 (SKS) and threonine 64 each bind shikimate. Residue lysine 68 is the Proton acceptor of the active site. Residue glutamate 83 coordinates NADP(+). The shikimate site is built by asparagine 92 and aspartate 117. NADP(+) is bound by residues 141 to 145 (GAGGA), 165 to 170 (NRTLSK), and methionine 232. Residue tyrosine 234 participates in shikimate binding. Residue glycine 254 participates in NADP(+) binding.

It belongs to the shikimate dehydrogenase family. Homodimer.

It catalyses the reaction shikimate + NADP(+) = 3-dehydroshikimate + NADPH + H(+). The protein operates within metabolic intermediate biosynthesis; chorismate biosynthesis; chorismate from D-erythrose 4-phosphate and phosphoenolpyruvate: step 4/7. In terms of biological role, involved in the biosynthesis of the chorismate, which leads to the biosynthesis of aromatic amino acids. Catalyzes the reversible NADPH linked reduction of 3-dehydroshikimate (DHSA) to yield shikimate (SA). The sequence is that of Shikimate dehydrogenase (NADP(+)) from Psychrobacter arcticus (strain DSM 17307 / VKM B-2377 / 273-4).